The sequence spans 23 residues: Augerpeptide hhe7a (23 aa).

Cystine bridges form between C3–C11, C6–C19, and C10–C22.

Expressed by the venom duct.

It is found in the secreted. Causes abnormal twist followed by immobility when injected into C.elegans. This chain is Augerpeptide hhe7a, found in Hastula hectica (Sea snail).